The primary structure comprises 390 residues: Neuromedin-B receptor (390 aa).

Residues M1–C44 lie on the Extracellular side of the membrane. N-linked (GlcNAc...) asparagine glycans are attached at residues N8 and N16. Residues V45–V65 traverse the membrane as a helical segment. Residues K66–S76 lie on the Cytoplasmic side of the membrane. A helical transmembrane segment spans residues V77–V97. Residues P98–K117 are Extracellular-facing. A disulfide bond links C116 and C198. A helical transmembrane segment spans residues L118–S138. Residues A139–G155 lie on the Cytoplasmic side of the membrane. Residues A156–V176 traverse the membrane as a helical segment. Residues P177 to K210 lie on the Extracellular side of the membrane. A glycan (N-linked (GlcNAc...) asparagine) is linked at N192. The helical transmembrane segment at I211–Y231 threads the bilayer. At Y232 to K266 the chain is on the cytoplasmic side. A helical membrane pass occupies residues I267 to M287. Over Y288–V305 the chain is Extracellular. The helical transmembrane segment at T306–S328 threads the bilayer. The Cytoplasmic portion of the chain corresponds to E329–L390. C341 is lipidated: S-palmitoyl cysteine. Phosphoserine is present on S352.

The protein belongs to the G-protein coupled receptor 1 family. As to expression, highly expressed in peripheral tissues where it is detected in the respiratory system, circulatory system, digestive system, urogenital system, lymphatic organs and endocrine system (at protein level). In the testis, expressed mainly in Leydig cells (at protein level).

It is found in the cell membrane. Its function is as follows. Receptor for neuromedin-B. Contributes to the maintenance of basal sigh rate through signaling in the pre-Botzinger complex, a cluster of several thousand neurons in the ventrolateral medulla responsible for inspiration during respiratory activity. Contributes to the induction of sneezing following exposure to chemical irritants or allergens which causes release of NMB by nasal sensory neurons and activation of NMBR-expressing neurons in the sneeze-evoking region of the brainstem. These in turn activate neurons of the caudal ventral respiratory group, giving rise to the sneezing response. Contributes to induction of acute itch, possibly through its activation on dorsal root ganglion neurons by the NMB peptide. Plays a role in the innate immune response to influenza A virus infection by enhancing interferon alpha expression and reducing expression of IL6. Plays a role in CSF1-induced proliferation of osteoclast precursors by contributing to the positive regulation of the expression of the CSF1 receptor CSF1R. The chain is Neuromedin-B receptor (NMBR) from Sus scrofa (Pig).